The chain runs to 345 residues: Phosphoribosylformylglycinamidine cyclo-ligase (345 aa).

This sequence belongs to the AIR synthase family.

The protein localises to the cytoplasm. It catalyses the reaction 2-formamido-N(1)-(5-O-phospho-beta-D-ribosyl)acetamidine + ATP = 5-amino-1-(5-phospho-beta-D-ribosyl)imidazole + ADP + phosphate + H(+). It participates in purine metabolism; IMP biosynthesis via de novo pathway; 5-amino-1-(5-phospho-D-ribosyl)imidazole from N(2)-formyl-N(1)-(5-phospho-D-ribosyl)glycinamide: step 2/2. In Cronobacter sakazakii (strain ATCC BAA-894) (Enterobacter sakazakii), this protein is Phosphoribosylformylglycinamidine cyclo-ligase.